The sequence spans 120 residues: Ribosome-binding factor A (120 aa).

The protein belongs to the RbfA family. In terms of assembly, monomer. Binds 30S ribosomal subunits, but not 50S ribosomal subunits or 70S ribosomes.

It localises to the cytoplasm. Functionally, one of several proteins that assist in the late maturation steps of the functional core of the 30S ribosomal subunit. Associates with free 30S ribosomal subunits (but not with 30S subunits that are part of 70S ribosomes or polysomes). Required for efficient processing of 16S rRNA. May interact with the 5'-terminal helix region of 16S rRNA. The protein is Ribosome-binding factor A of Campylobacter jejuni subsp. jejuni serotype O:6 (strain 81116 / NCTC 11828).